A 127-amino-acid polypeptide reads, in one-letter code: Small ribosomal subunit protein uS11 (127 aa).

The protein belongs to the universal ribosomal protein uS11 family. As to quaternary structure, part of the 30S ribosomal subunit. Interacts with proteins S7 and S18. Binds to IF-3.

Functionally, located on the platform of the 30S subunit, it bridges several disparate RNA helices of the 16S rRNA. Forms part of the Shine-Dalgarno cleft in the 70S ribosome. This is Small ribosomal subunit protein uS11 from Chlorobium chlorochromatii (strain CaD3).